A 268-amino-acid polypeptide reads, in one-letter code: Microtubule-associated protein RP/EB family member 1 (268 aa).

Ala-2 is modified (N-acetylalanine). Positions 14–116 (NLSRHDMLAW…FVQWFKKFFD (103 aa)) constitute a Calponin-homology (CH) domain. Lys-66 is subject to N6-crotonyllysine. A Phosphotyrosine modification is found at Tyr-124. The interaction with MTUS2/TIP150 stretch occupies residues 124 to 268 (YDPVAARQGQ…GGPQEEQEEY (145 aa)). Positions 146–191 (LSKPKKPLGSGSAAPQRPIATQRTTAAPKAGPGMVRKNPGMGNGDD) are disordered. At Ser-155 the chain carries Phosphoserine. An EB1 C-terminal domain is found at 185 to 255 (GMGNGDDEAA…LYATDEGFVI (71 aa)). The interval 206–211 (TVEDLE) is interaction with APC. The interval 208–268 (EDLEKERDFY…GGPQEEQEEY (61 aa)) is DCTN1-binding. Lys-220 is modified (N6-acetyllysine). The segment at 220–242 (KLRNIELICQENEGENDPVLQRI) is APC-binding. The interval 232–255 (EGENDPVLQRIVDILYATDEGFVI) is interaction with SKA1.

The protein belongs to the MAPRE family. As to quaternary structure, homodimer. Heterodimer with MAPRE3. Interacts with DCTN1, DCTN2, TERF1 and dynein intermediate chain. Interaction with DIAPH1 and DIAPH2. Interacts (via C-terminal residues 206-211) with APC (via C-terminal residues 2674-2845); the interaction inhibits association with and bundling of F-actin. Interacts with CLASP2, DST, KIF2C and STIM1; probably required for their targeting to the growing microtubule plus ends. Interacts with MTUS2; interaction is direct and probably targets MTUS2 to microtubules. Interacts (via C-terminus) with SKA1 (via SXIP motif); the interaction is direct and stabilizes the kinetochore-microtubule attachment of the SKA1 complex. Interacts with APC2. Interacts with CLASP1. Interacts with CDK5RAP2. According to another report, MAPRE1 does not interact with CDK5RAP2. Interacts with MACF1. Interacts with RABL2/RABL2A; binds preferentially to GTP-bound RABL2. Interacts with KCNAB2. Interacts (via C-terminus) with CLIP1. Interacts with SLAIN2 and SLAIN1. Interacts with KIF18B; this interaction is required for efficient accumulation of KIF18B at microtubule plus ends. Interacts with MISP. Interacts with KNSTRN. Interacts with NCKAP5L. Interacts with AKAP9. Interacts with PDE4DIP; this interaction, which is PDE4DIP isoform-specific, is required for its recruitment to the Golgi apparatus. Interacts with CAMSAP2. May form a pericentrosomal complex with AKAP9, CDK5RAP2 and PDE4DIP isoform 2/MMG8/SMYLE; within this complex, MAPRE1 binding to CDK5RAP2 may be mediated by PDE4DIP. Contrary to other mammalian species, does not interact with CDK5RAP2, possibly due to the lack of conservation of the MAPRE1-binding motif in rat CDK5RAP2. Interacts with AKNA. Interacts with GAS2L1, GAS2L2, and GAS2L3. Interacts with RARRES1 and AGBL2. Acetylation at Lys-220 by KAT2B/PCAF promotes dynamic kinetochore-microtubule interactions in early mitosis. In terms of processing, crotonylated by KAT5 during mitosis, promoting astral microtubule plasticity and dynamic connection between astral microtubules and the cortex during mitotic chromosome segregation, thereby ensuring accurate spindle positioning in mitosis. Decrotonylated by HDAC3.

The protein localises to the cytoplasm. It localises to the cytoskeleton. The protein resides in the microtubule organizing center. Its subcellular location is the centrosome. It is found in the golgi apparatus. The protein localises to the spindle. It localises to the spindle pole. Functionally, plus-end tracking protein (+TIP) that binds to the plus-end of microtubules and regulates the dynamics of the microtubule cytoskeleton. Recruits other +TIP proteins to microtubules by binding to a conserved Ser-X-Leu-Pro (SXLP) motif in their polypeptide chains. Promotes cytoplasmic microtubule nucleation and elongation. Involved in mitotic spindle positioning by stabilizing microtubules and promoting dynamic connection between astral microtubules and the cortex during mitotic chromosome segregation. Assists chromosome alignment in metaphase by recruiting the SKA complex to the spindle and stabilizing its interactions with microtubule bundles (K-fibers). Also acts as a regulator of minus-end microtubule organization: interacts with the complex formed by AKAP9 and PDE4DIP, leading to recruit CAMSAP2 to the Golgi apparatus, thereby tethering non-centrosomal minus-end microtubules to the Golgi, an important step for polarized cell movement. Promotes elongation of CAMSAP2-decorated microtubule stretches on the minus-end of microtubules. Acts as a regulator of autophagosome transport via interaction with CAMSAP2. Functions downstream of Rho GTPases and DIAPH1 in stable microtubule formation. May play a role in cell migration. This is Microtubule-associated protein RP/EB family member 1 (Mapre1) from Rattus norvegicus (Rat).